A 156-amino-acid polypeptide reads, in one-letter code: Low molecular weight protein-tyrosine-phosphatase YfkJ (156 aa).

Cysteine 8 serves as the catalytic Nucleophile. Arginine 14 is an active-site residue. Residue aspartate 125 is the Proton donor of the active site.

It belongs to the low molecular weight phosphotyrosine protein phosphatase family.

The catalysed reaction is O-phospho-L-tyrosyl-[protein] + H2O = L-tyrosyl-[protein] + phosphate. Efficiently inhibited by Cu(2+) ion, Zn(2+) ion and N-ethylmaleimide, while the addition of Mg(2+), Ca(2+) or Fe(3+) ions has minimal effect. Inhibited in a competitive manner by vanadate. Its function is as follows. Dephosphorylates the phosphotyrosine-containing proteins. Involved in ethanol stress resistance. This is Low molecular weight protein-tyrosine-phosphatase YfkJ (yfkJ) from Bacillus subtilis (strain 168).